Consider the following 318-residue polypeptide: Ubiquitin-conjugating enzyme E2 J1 (318 aa).

Topologically, residues 1-282 are cytoplasmic; sequence METRYNLKSP…QGQPPRAHHT (282 aa). The UBC core domain maps to 10-168; sequence PAVKRLMKEA…VLLPLKSGSG (159 aa). Catalysis depends on cysteine 91, which acts as the Glycyl thioester intermediate. The residue at position 184 (serine 184) is a Phosphoserine. A compositionally biased stretch (polar residues) spans 215 to 233; it reads PTTFQGATASTSYGAQNPS. The segment at 215 to 283 is disordered; it reads PTTFQGATAS…GQPPRAHHTE (69 aa). The span at 249–269 shows a compositional bias: low complexity; that stretch reads SMSPRQRRAQQQSQRRPSTSP. 2 positions are modified to phosphoserine: serine 266 and serine 268. The chain crosses the membrane as a helical; Anchor for type IV membrane protein span at residues 283–303; that stretch reads EHGGSAMLIIILTLALAALIF. The Lumenal portion of the chain corresponds to 304–318; the sequence is RRIYLANEYIFDFEL.

This sequence belongs to the ubiquitin-conjugating enzyme family. Component of the HRD1 complex, which comprises at least SYNV1/HRD1, DERL1/2, FAM8A1, HERPUD1/HERP, OS9, SEL1L and UBE2J1. Interacts with E3 ligase RNF26. Interacts with E3 ligase RNF133. Phosphorylated at Ser-184 in a cytosolic stress-dependent manner by MAP kinase p38 MAPKAPK2. In terms of processing, phosphorylated UBE2J1 is rapidly ubiquitinated and subsequently degraded by the proteasome.

It localises to the endoplasmic reticulum membrane. The enzyme catalyses S-ubiquitinyl-[E1 ubiquitin-activating enzyme]-L-cysteine + [E2 ubiquitin-conjugating enzyme]-L-cysteine = [E1 ubiquitin-activating enzyme]-L-cysteine + S-ubiquitinyl-[E2 ubiquitin-conjugating enzyme]-L-cysteine.. Its pathway is protein modification; protein ubiquitination. Catalyzes the covalent attachment of ubiquitin to other proteins. Functions in the selective degradation of misfolded membrane proteins from the endoplasmic reticulum (ERAD) and is essential for cells to recover from ER stress. Plays a role in MAPKAPK2-dependent translational control of TNF-alpha synthesis. Also acts as a platform for perinuclear positioning of the endosomal system by mediating ubiquitination of SQSTM1 through interaction with the E3 ubiquitin-protein ligase RNF26. Plays a role in male fecundity through the interaction with the E3 ubiquitin-protein ligase RNF133. This chain is Ubiquitin-conjugating enzyme E2 J1 (Ube2j1), found in Mus musculus (Mouse).